The following is a 220-amino-acid chain: NADH-quinone oxidoreductase subunit I (220 aa).

2 consecutive 4Fe-4S ferredoxin-type domains span residues 71–102 (LQRLLDSGSERCIGCGLCEKICTSNCIRIITH) and 112–141 (DSYTINLGRCIYCGLCAEVCPELAIVMGNR). [4Fe-4S] cluster-binding residues include C82, C85, C88, C92, C121, C124, C127, and C131. The tract at residues 187–220 (MQATPLDYVQEPSKEESKEETPTNPESNKGDENV) is disordered. The segment covering 198 to 207 (PSKEESKEET) has biased composition (basic and acidic residues).

Belongs to the complex I 23 kDa subunit family. As to quaternary structure, NDH-1 is composed of 14 different subunits. Subunits NuoA, H, J, K, L, M, N constitute the membrane sector of the complex. Requires [4Fe-4S] cluster as cofactor.

The protein localises to the cell inner membrane. It catalyses the reaction a quinone + NADH + 5 H(+)(in) = a quinol + NAD(+) + 4 H(+)(out). In terms of biological role, NDH-1 shuttles electrons from NADH, via FMN and iron-sulfur (Fe-S) centers, to quinones in the respiratory chain. The immediate electron acceptor for the enzyme in this species is believed to be ubiquinone. Couples the redox reaction to proton translocation (for every two electrons transferred, four hydrogen ions are translocated across the cytoplasmic membrane), and thus conserves the redox energy in a proton gradient. This Helicobacter pylori (strain Shi470) protein is NADH-quinone oxidoreductase subunit I.